A 341-amino-acid chain; its full sequence is NADH-quinone oxidoreductase subunit H 1 (341 aa).

8 helical membrane passes run Leu-13–Ile-33, Gly-82–Ile-102, Val-115–Gly-135, Ile-161–Val-181, Leu-190–Leu-210, Tyr-248–Pro-268, Trp-277–Met-297, and Val-317–Gly-337.

This sequence belongs to the complex I subunit 1 family. In terms of assembly, NDH-1 is composed of 14 different subunits. Subunits NuoA, H, J, K, L, M, N constitute the membrane sector of the complex.

It localises to the cell inner membrane. The catalysed reaction is a quinone + NADH + 5 H(+)(in) = a quinol + NAD(+) + 4 H(+)(out). In terms of biological role, NDH-1 shuttles electrons from NADH, via FMN and iron-sulfur (Fe-S) centers, to quinones in the respiratory chain. The immediate electron acceptor for the enzyme in this species is believed to be ubiquinone. Couples the redox reaction to proton translocation (for every two electrons transferred, four hydrogen ions are translocated across the cytoplasmic membrane), and thus conserves the redox energy in a proton gradient. This subunit may bind ubiquinone. This chain is NADH-quinone oxidoreductase subunit H 1, found in Rhodopseudomonas palustris (strain BisB18).